The chain runs to 342 residues: S-adenosylmethionine:tRNA ribosyltransferase-isomerase (342 aa).

This sequence belongs to the QueA family. As to quaternary structure, monomer.

It localises to the cytoplasm. The enzyme catalyses 7-aminomethyl-7-carbaguanosine(34) in tRNA + S-adenosyl-L-methionine = epoxyqueuosine(34) in tRNA + adenine + L-methionine + 2 H(+). It functions in the pathway tRNA modification; tRNA-queuosine biosynthesis. Transfers and isomerizes the ribose moiety from AdoMet to the 7-aminomethyl group of 7-deazaguanine (preQ1-tRNA) to give epoxyqueuosine (oQ-tRNA). The protein is S-adenosylmethionine:tRNA ribosyltransferase-isomerase of Streptococcus pyogenes serotype M1.